Consider the following 141-residue polypeptide: Putative pre-16S rRNA nuclease (141 aa).

It belongs to the YqgF nuclease family.

The protein resides in the cytoplasm. Its function is as follows. Could be a nuclease involved in processing of the 5'-end of pre-16S rRNA. The chain is Putative pre-16S rRNA nuclease from Natranaerobius thermophilus (strain ATCC BAA-1301 / DSM 18059 / JW/NM-WN-LF).